Consider the following 173-residue polypeptide: Peptide methionine sulfoxide reductase MsrA (173 aa).

The active site involves Cys-10.

The protein belongs to the MsrA Met sulfoxide reductase family.

The enzyme catalyses L-methionyl-[protein] + [thioredoxin]-disulfide + H2O = L-methionyl-(S)-S-oxide-[protein] + [thioredoxin]-dithiol. It catalyses the reaction [thioredoxin]-disulfide + L-methionine + H2O = L-methionine (S)-S-oxide + [thioredoxin]-dithiol. Its function is as follows. Has an important function as a repair enzyme for proteins that have been inactivated by oxidation. Catalyzes the reversible oxidation-reduction of methionine sulfoxide in proteins to methionine. The protein is Peptide methionine sulfoxide reductase MsrA of Psychrobacter cryohalolentis (strain ATCC BAA-1226 / DSM 17306 / VKM B-2378 / K5).